The primary structure comprises 302 residues: Large ribosomal subunit protein uL3c (302 aa).

Residues 1–36 (MFQSSRLVALGLCAALVLVGGSIILSGLSPNLSSPM) constitute a chloroplast transit peptide. Positions 208 to 239 (FQGSIRRWGMKRGPMSHGSKSHRQHGSIGCSA) are disordered.

Belongs to the universal ribosomal protein uL3 family. As to quaternary structure, part of the 50S ribosomal subunit.

It localises to the plastid. The protein localises to the chloroplast. One of the primary rRNA binding proteins, it binds directly near the 3'-end of the 23S rRNA, where it nucleates assembly of the 50S subunit. This Bigelowiella natans (Pedinomonas minutissima) protein is Large ribosomal subunit protein uL3c (RPL3).